Reading from the N-terminus, the 183-residue chain is Ribosome rescue factor SmrB (183 aa).

One can recognise a Smr domain in the interval 98-173 (LDLHGLTQLQ…GDAALLVLIE (76 aa)).

It belongs to the SmrB family. In terms of assembly, associates with collided ribosomes, but not with correctly translating polysomes.

Its function is as follows. Acts as a ribosome collision sensor. Detects stalled/collided disomes (pairs of ribosomes where the leading ribosome is stalled and a second ribosome has collided with it) and endonucleolytically cleaves mRNA at the 5' boundary of the stalled ribosome. Stalled/collided disomes form a new interface (primarily via the 30S subunits) that binds SmrB. Cleaved mRNA becomes available for tmRNA ligation, leading to ribosomal subunit dissociation and rescue of stalled ribosomes. This chain is Ribosome rescue factor SmrB, found in Escherichia coli (strain 55989 / EAEC).